A 420-amino-acid chain; its full sequence is Zinc finger protein 362 (420 aa).

3 disordered regions span residues 1 to 28 (MSRSSPSGKGHSRMAEPRFNNPYFWPPP), 54 to 80 (RPPHLPPTSASSQQPLLVPPAPAESSQ), and 115 to 155 (VTGL…SQSR). Over residues 121-154 (STRTPSVSTSESSAGAGTGTGTSTPSTPTTTSQS) the composition is skewed to low complexity. Thr-162 bears the Phosphothreonine mark. The disordered stretch occupies residues 178–202 (TIQGHGLLGPPKSERGRKKIKAENP). Lys-198 participates in a covalent cross-link: Glycyl lysine isopeptide (Lys-Gly) (interchain with G-Cter in SUMO2). 6 consecutive C2H2-type zinc fingers follow at residues 227-249 (YRCKVCPLTFFTKSEMQIHSKSH), 255-277 (HKCPHCSKSFANASYLAQHLRIH), 283-305 (YHCSYCDKSFRQLSHLQQHTRIH), 311-335 (YKCPHPGCEKAFTQLSNLQSHQRQH), 341-363 (YKCPNCYRAYSDSASLQIHLSAH), and 371-393 (YCCSMCGRAYTSETYLMKHMSKH). Ser-404 carries the post-translational modification Phosphoserine.

It belongs to the krueppel C2H2-type zinc-finger protein family.

It is found in the nucleus. Functionally, may be involved in transcriptional regulation. The protein is Zinc finger protein 362 (ZNF362) of Homo sapiens (Human).